A 100-amino-acid chain; its full sequence is Urease subunit gamma (100 aa).

Belongs to the urease gamma subunit family. Heterotrimer of UreA (gamma), UreB (beta) and UreC (alpha) subunits. Three heterotrimers associate to form the active enzyme.

It is found in the cytoplasm. It catalyses the reaction urea + 2 H2O + H(+) = hydrogencarbonate + 2 NH4(+). It participates in nitrogen metabolism; urea degradation; CO(2) and NH(3) from urea (urease route): step 1/1. This Bacillus sp. (strain TB-90) protein is Urease subunit gamma.